The sequence spans 185 residues: dCTP deaminase (185 aa).

DCTP contacts are provided by residues 107–112, 131–133, Gln152, Tyr166, and Gln176; these read KSTYAR and TLE. Catalysis depends on Glu133, which acts as the Proton donor/acceptor.

It belongs to the dCTP deaminase family. Homotrimer.

It carries out the reaction dCTP + H2O + H(+) = dUTP + NH4(+). The protein operates within pyrimidine metabolism; dUMP biosynthesis; dUMP from dCTP (dUTP route): step 1/2. Catalyzes the deamination of dCTP to dUTP. This chain is dCTP deaminase, found in Anaplasma marginale (strain Florida).